We begin with the raw amino-acid sequence, 398 residues long: DNA-directed RNA polymerase III subunit RPC4 (398 aa).

The disordered stretch occupies residues 1 to 114 (MSEGNAAGEP…SHSIFEQGPA (114 aa)). An N-acetylserine modification is found at Ser-2. The residue at position 42 (Ser-42) is a Phosphoserine. Residues 66-100 (KIKEEPKEEVTVKKEKRERDRDRQREGHGRGRGRP) are compositionally biased toward basic and acidic residues. Glycyl lysine isopeptide (Lys-Gly) (interchain with G-Cter in SUMO2) cross-links involve residues Lys-68 and Lys-78. Omega-N-methylarginine is present on residues Arg-95, Arg-97, and Arg-99. Residues Lys-141, Lys-152, Lys-160, Lys-190, Lys-199, Lys-206, Lys-220, Lys-285, Lys-302, Lys-310, and Lys-396 each participate in a glycyl lysine isopeptide (Lys-Gly) (interchain with G-Cter in SUMO2) cross-link. Residues 220–244 (KEEPRDEEEEAKMKAPPKAARKTPG) form a disordered region.

It belongs to the eukaryotic RPC4/POLR3D RNA polymerase subunit family. In terms of assembly, component of the RNA polymerase III complex consisting of 17 subunits: a ten-subunit horseshoe-shaped catalytic core composed of POLR3A/RPC1, POLR3B/RPC2, POLR1C/RPAC1, POLR1D/RPAC2, POLR3K/RPC10, POLR2E/RPABC1, POLR2F/RPABC2, POLR2H/RPABC3, POLR2K/RPABC4 and POLR2L/RPABC5; a mobile stalk composed of two subunits POLR3H/RPC8 and CRCP/RPC9, protruding from the core and functioning primarily in transcription initiation; and additional subunits homologous to general transcription factors of the RNA polymerase II machinery, POLR3C/RPC3-POLR3F/RPC6-POLR3G/RPC7 heterotrimer required for transcription initiation and POLR3D/RPC4-POLR3E/RPC5 heterodimer involved in both transcription initiation and termination. Sumoylation on Lys-141 can serve as a signal to mark misfolded Pol III for proteasomal degradation.

The protein resides in the nucleus. Functionally, DNA-dependent RNA polymerase catalyzes the transcription of DNA into RNA using the four ribonucleoside triphosphates as substrates. Specific peripheric component of RNA polymerase III (Pol III) which synthesizes small non-coding RNAs including 5S rRNA, snRNAs, tRNAs and miRNAs from at least 500 distinct genomic loci. Assembles with POLR3E/RPC5 forming a subcomplex that binds the Pol III core. Enables recruitment of Pol III at transcription initiation site and drives transcription initiation from both type 2 and type 3 DNA promoters. Required for efficient transcription termination and reinitiation. Pol III plays a key role in sensing and limiting infection by intracellular bacteria and DNA viruses. Acts as nuclear and cytosolic DNA sensor involved in innate immune response. Can sense non-self dsDNA that serves as template for transcription into dsRNA. The non-self RNA polymerase III transcripts, such as Epstein-Barr virus-encoded RNAs (EBERs) induce type I interferon and NF-kappa-B through the RIG-I pathway. This is DNA-directed RNA polymerase III subunit RPC4 from Homo sapiens (Human).